Consider the following 484-residue polypeptide: Glutamyl-tRNA(Gln) amidotransferase subunit A (484 aa).

Catalysis depends on charge relay system residues K77 and S152. Residue S176 is the Acyl-ester intermediate of the active site.

The protein belongs to the amidase family. GatA subfamily. As to quaternary structure, heterotrimer of A, B and C subunits.

The enzyme catalyses L-glutamyl-tRNA(Gln) + L-glutamine + ATP + H2O = L-glutaminyl-tRNA(Gln) + L-glutamate + ADP + phosphate + H(+). Its function is as follows. Allows the formation of correctly charged Gln-tRNA(Gln) through the transamidation of misacylated Glu-tRNA(Gln) in organisms which lack glutaminyl-tRNA synthetase. The reaction takes place in the presence of glutamine and ATP through an activated gamma-phospho-Glu-tRNA(Gln). This is Glutamyl-tRNA(Gln) amidotransferase subunit A from Pseudomonas aeruginosa (strain ATCC 15692 / DSM 22644 / CIP 104116 / JCM 14847 / LMG 12228 / 1C / PRS 101 / PAO1).